Reading from the N-terminus, the 184-residue chain is Photosystem I assembly protein Ycf4 (184 aa).

2 helical membrane-spanning segments follow: residues 19 to 39 (ISNF…LLVG) and 57 to 77 (IIFF…LFIS).

Belongs to the Ycf4 family.

Its subcellular location is the plastid. The protein resides in the chloroplast thylakoid membrane. In terms of biological role, seems to be required for the assembly of the photosystem I complex. This chain is Photosystem I assembly protein Ycf4, found in Drimys granadensis.